The primary structure comprises 124 residues: Nucleoid-associated protein Noca_0318 (124 aa).

This sequence belongs to the YbaB/EbfC family. Homodimer.

It localises to the cytoplasm. Its subcellular location is the nucleoid. Functionally, binds to DNA and alters its conformation. May be involved in regulation of gene expression, nucleoid organization and DNA protection. The sequence is that of Nucleoid-associated protein Noca_0318 from Nocardioides sp. (strain ATCC BAA-499 / JS614).